The following is a 201-amino-acid chain: Cell division protein SepF (201 aa).

Residues valine 27 to arginine 38 show a composition bias toward basic and acidic residues. A disordered region spans residues valine 27–arginine 99. Residues glutamine 43–serine 54 are compositionally biased toward polar residues. Basic and acidic residues predominate over residues asparagine 72–arginine 81. Residues asparagine 83 to valine 92 show a composition bias toward polar residues.

It belongs to the SepF family. Homodimer. Interacts with FtsZ.

Its subcellular location is the cytoplasm. Functionally, cell division protein that is part of the divisome complex and is recruited early to the Z-ring. Probably stimulates Z-ring formation, perhaps through the cross-linking of FtsZ protofilaments. Its function overlaps with FtsA. The sequence is that of Cell division protein SepF from Streptococcus agalactiae serotype Ia (strain ATCC 27591 / A909 / CDC SS700).